The following is a 202-amino-acid chain: Small ribosomal subunit protein uS4 (202 aa).

Positions 91-168 (SRLSSVLYNS…QKVPDYLEVD (78 aa)) constitute an S4 RNA-binding domain.

It belongs to the universal ribosomal protein uS4 family. In terms of assembly, part of the 30S ribosomal subunit. Contacts protein S5. The interaction surface between S4 and S5 is involved in control of translational fidelity.

Its function is as follows. One of the primary rRNA binding proteins, it binds directly to 16S rRNA where it nucleates assembly of the body of the 30S subunit. In terms of biological role, with S5 and S12 plays an important role in translational accuracy. The chain is Small ribosomal subunit protein uS4 from Ehrlichia chaffeensis (strain ATCC CRL-10679 / Arkansas).